Reading from the N-terminus, the 120-residue chain is Large ribosomal subunit protein P3 (120 aa).

The segment at 83–120 is disordered; it reads GGGGAAASGGAAAEAPKEEKKEEEKEESDDDMGFSLFD.

Belongs to the eukaryotic ribosomal protein P1/P2 family. In terms of processing, phosphorylated.

Its function is as follows. Plays an important role in the elongation step of protein synthesis. This is Large ribosomal subunit protein P3 (RPP3A) from Zea mays (Maize).